Reading from the N-terminus, the 125-residue chain is Fluoride-specific ion channel FluC (125 aa).

Helical transmembrane passes span 2–22 (WLSI…RTGF), 35–55 (LGTL…LAFF), 68–88 (LIIT…AEVV), and 98–118 (WALG…LLGI). 2 residues coordinate Na(+): Gly75 and Thr78.

It belongs to the fluoride channel Fluc/FEX (TC 1.A.43) family.

It is found in the cell inner membrane. It carries out the reaction fluoride(in) = fluoride(out). With respect to regulation, na(+) is not transported, but it plays an essential structural role and its presence is essential for fluoride channel function. Functionally, fluoride-specific ion channel. Important for reducing fluoride concentration in the cell, thus reducing its toxicity. This Polynucleobacter asymbioticus (strain DSM 18221 / CIP 109841 / QLW-P1DMWA-1) (Polynucleobacter necessarius subsp. asymbioticus) protein is Fluoride-specific ion channel FluC.